A 363-amino-acid chain; its full sequence is DNA replication and repair protein RecF (363 aa).

30–37 (GDNAQGKT) contacts ATP.

It belongs to the RecF family.

Its subcellular location is the cytoplasm. Functionally, the RecF protein is involved in DNA metabolism; it is required for DNA replication and normal SOS inducibility. RecF binds preferentially to single-stranded, linear DNA. It also seems to bind ATP. The polypeptide is DNA replication and repair protein RecF (Syntrophotalea carbinolica (strain DSM 2380 / NBRC 103641 / GraBd1) (Pelobacter carbinolicus)).